Here is a 1401-residue protein sequence, read N- to C-terminus: DNA-directed RNA polymerase subunit beta' (1401 aa).

Positions 70, 72, 85, and 88 each coordinate Zn(2+). Mg(2+) contacts are provided by Asp460, Asp462, and Asp464. Residues Cys808, Cys882, Cys889, and Cys892 each contribute to the Zn(2+) site.

Belongs to the RNA polymerase beta' chain family. In terms of assembly, the RNAP catalytic core consists of 2 alpha, 1 beta, 1 beta' and 1 omega subunit. When a sigma factor is associated with the core the holoenzyme is formed, which can initiate transcription. It depends on Mg(2+) as a cofactor. Zn(2+) is required as a cofactor.

The catalysed reaction is RNA(n) + a ribonucleoside 5'-triphosphate = RNA(n+1) + diphosphate. DNA-dependent RNA polymerase catalyzes the transcription of DNA into RNA using the four ribonucleoside triphosphates as substrates. This Legionella pneumophila (strain Paris) protein is DNA-directed RNA polymerase subunit beta'.